We begin with the raw amino-acid sequence, 202 residues long: Holliday junction branch migration complex subunit RuvA (202 aa).

The segment at 1–63 (MIASLRGTVL…EDSMTLYGFT (63 aa)) is domain I. The segment at 64-142 (SQDDRDMFHV…AFAPAESADL (79 aa)) is domain II. Residues 143 to 148 (SSAAPA) form a flexible linker region. Residues 149-202 (AAGPVVEDVVEALIGLGFTDKMARPVVESVVAEQPDAATPVVLRAALSQLGAKK) form a domain III region.

It belongs to the RuvA family. As to quaternary structure, homotetramer. Forms an RuvA(8)-RuvB(12)-Holliday junction (HJ) complex. HJ DNA is sandwiched between 2 RuvA tetramers; dsDNA enters through RuvA and exits via RuvB. An RuvB hexamer assembles on each DNA strand where it exits the tetramer. Each RuvB hexamer is contacted by two RuvA subunits (via domain III) on 2 adjacent RuvB subunits; this complex drives branch migration. In the full resolvosome a probable DNA-RuvA(4)-RuvB(12)-RuvC(2) complex forms which resolves the HJ.

The protein resides in the cytoplasm. Its function is as follows. The RuvA-RuvB-RuvC complex processes Holliday junction (HJ) DNA during genetic recombination and DNA repair, while the RuvA-RuvB complex plays an important role in the rescue of blocked DNA replication forks via replication fork reversal (RFR). RuvA specifically binds to HJ cruciform DNA, conferring on it an open structure. The RuvB hexamer acts as an ATP-dependent pump, pulling dsDNA into and through the RuvAB complex. HJ branch migration allows RuvC to scan DNA until it finds its consensus sequence, where it cleaves and resolves the cruciform DNA. In Corynebacterium aurimucosum (strain ATCC 700975 / DSM 44827 / CIP 107346 / CN-1) (Corynebacterium nigricans), this protein is Holliday junction branch migration complex subunit RuvA.